The sequence spans 223 residues: Ribonuclease 3 (223 aa).

Positions 3 to 125 (LERLQKKLSY…IIAAIYLDAG (123 aa)) constitute an RNase III domain. Glutamate 38 provides a ligand contact to Mg(2+). Aspartate 42 is an active-site residue. Positions 111 and 114 each coordinate Mg(2+). Glutamate 114 is an active-site residue. One can recognise a DRBM domain in the interval 152–222 (DPKTRLQEFL…AEQVLAKLTT (71 aa)).

This sequence belongs to the ribonuclease III family. As to quaternary structure, homodimer. Mg(2+) is required as a cofactor.

It localises to the cytoplasm. It carries out the reaction Endonucleolytic cleavage to 5'-phosphomonoester.. Digests double-stranded RNA. Involved in the processing of primary rRNA transcript to yield the immediate precursors to the large and small rRNAs (23S and 16S). Processes some mRNAs, and tRNAs when they are encoded in the rRNA operon. Processes pre-crRNA and tracrRNA of type II CRISPR loci if present in the organism. The protein is Ribonuclease 3 of Actinobacillus pleuropneumoniae serotype 5b (strain L20).